The following is a 740-amino-acid chain: ATP-dependent RNA helicase DDX1 (740 aa).

The segment at M1–S295 is necessary for interaction with HNRNPK. The tract at residues M1–V448 is interaction with dsRNA. Positions M1–Y525 are necessary for interaction with RELA. A Helicase ATP-binding domain is found at A2–W428. Position 46–53 (A46–T53) interacts with ATP. Positions D70–F247 constitute a B30.2/SPRY domain. N6-acetyllysine is present on residues K239 and K268. Residue K281 is modified to N6-acetyllysine; alternate. K281 participates in a covalent cross-link: Glycyl lysine isopeptide (Lys-Gly) (interchain with G-Cter in SUMO2); alternate. The DEAD box signature appears at D370 to D373. S481 carries the phosphoserine modification. A Helicase C-terminal domain is found at K493 to V681. A necessary for interaction with HNRNPK region spans residues Y525–F740.

The protein belongs to the DEAD box helicase family. DDX1 subfamily. As to quaternary structure, found in a multi-helicase-TICAM1 complex at least composed of DHX36, DDX1, DDX21 and TICAM1; this complex exists in resting cells with or without poly(I:C) RNA ligand stimulation. Interacts with DHX36. Interacts (via B30.2/SPRY domain) with DDX21 (via N-terminus); this interaction serves as bridges to TICAM1. Interacts with FAM98A (via N- and C-terminus). Interacts with PHF5A (via C-terminus). Interacts with MBNL1. Interacts with CSTF2. Interacts with HNRNPK. Interacts with ATM. Interacts with RELA (via C-terminus). Component of the tRNA-splicing ligase complex. Interacts with PQBP1. Interacts with ERCC6. Post-translationally, phosphorylated by ATM kinase; phosphorylation is increased in response to ionizing radiation (IR).

It localises to the nucleus. The protein localises to the cytoplasm. The protein resides in the cytoplasmic granule. Its subcellular location is the cytosol. It is found in the mitochondrion. The enzyme catalyses ATP + H2O = ADP + phosphate + H(+). In terms of biological role, acts as an ATP-dependent RNA helicase, able to unwind both RNA-RNA and RNA-DNA duplexes. Possesses 5' single-stranded RNA overhang nuclease activity. Possesses ATPase activity on various RNA, but not DNA polynucleotides. May play a role in RNA clearance at DNA double-strand breaks (DSBs), thereby facilitating the template-guided repair of transcriptionally active regions of the genome. Together with RELA, acts as a coactivator to enhance NF-kappa-B-mediated transcriptional activation. Acts as a positive transcriptional regulator of cyclin CCND2 expression. Binds to the cyclin CCND2 promoter region. Associates with chromatin at the NF-kappa-B promoter region via association with RELA. Binds to poly(A) RNA. May be involved in 3'-end cleavage and polyadenylation of pre-mRNAs. Component of the tRNA-splicing ligase complex required to facilitate the enzymatic turnover of catalytic subunit RTCB: together with archease (ZBTB8OS), acts by facilitating the guanylylation of RTCB, a key intermediate step in tRNA ligation. Component of a multi-helicase-TICAM1 complex that acts as a cytoplasmic sensor of viral double-stranded RNA (dsRNA) and plays a role in the activation of a cascade of antiviral responses including the induction of pro-inflammatory cytokines via the adapter molecule TICAM1. Specifically binds (via helicase ATP-binding domain) on both short and long poly(I:C) dsRNA. The sequence is that of ATP-dependent RNA helicase DDX1 (DDX1) from Bos taurus (Bovine).